The following is a 290-amino-acid chain: Acetyl-coenzyme A carboxylase carboxyl transferase subunit beta (290 aa).

The CoA carboxyltransferase N-terminal domain maps to 27–290 (LWIKCPSCEA…LTRQPADAVA (264 aa)). Zn(2+)-binding residues include Cys31, Cys34, Cys50, and Cys53. The C4-type zinc finger occupies 31 to 53 (CPSCEAVLYRNDVEANLHVCPKC).

This sequence belongs to the AccD/PCCB family. As to quaternary structure, acetyl-CoA carboxylase is a heterohexamer composed of biotin carboxyl carrier protein (AccB), biotin carboxylase (AccC) and two subunits each of ACCase subunit alpha (AccA) and ACCase subunit beta (AccD). Requires Zn(2+) as cofactor.

It localises to the cytoplasm. It catalyses the reaction N(6)-carboxybiotinyl-L-lysyl-[protein] + acetyl-CoA = N(6)-biotinyl-L-lysyl-[protein] + malonyl-CoA. It functions in the pathway lipid metabolism; malonyl-CoA biosynthesis; malonyl-CoA from acetyl-CoA: step 1/1. In terms of biological role, component of the acetyl coenzyme A carboxylase (ACC) complex. Biotin carboxylase (BC) catalyzes the carboxylation of biotin on its carrier protein (BCCP) and then the CO(2) group is transferred by the transcarboxylase to acetyl-CoA to form malonyl-CoA. The sequence is that of Acetyl-coenzyme A carboxylase carboxyl transferase subunit beta from Paraburkholderia phymatum (strain DSM 17167 / CIP 108236 / LMG 21445 / STM815) (Burkholderia phymatum).